Consider the following 382-residue polypeptide: Anthranilate O-methyltransferase 1 (382 aa).

Tyr-20 lines the S-adenosyl-L-homocysteine pocket. Position 27 (Gln-27) interacts with anthranilate. S-adenosyl-L-homocysteine contacts are provided by Cys-61, Asn-66, Asp-102, Leu-103, Ser-146, and Tyr-147. Position 168 (Trp-168) interacts with anthranilate. Residues Glu-268 and Phe-270 each contribute to the Mg(2+) site.

This sequence belongs to the methyltransferase superfamily. Type-7 methyltransferase family. SABATH subfamily.

The catalysed reaction is anthranilate + S-adenosyl-L-methionine = O-methyl anthranilate + S-adenosyl-L-homocysteine. In terms of biological role, methyltransferase involved in the biosynthesis of methyl anthranilate in response to stresses. Utilizes anthranilic acid as substrate, but not salicylic acid. Produces exclusively the O-methyl ester. The sequence is that of Anthranilate O-methyltransferase 1 (AAMT1) from Zea mays (Maize).